The following is a 353-amino-acid chain: Chorismate synthase (353 aa).

NADP(+)-binding residues include R48 and R54. FMN-binding positions include 125–127 (RSS), 238–239 (NA), G278, 293–297 (KPTSS), and R319.

This sequence belongs to the chorismate synthase family. In terms of assembly, homotetramer. The cofactor is FMNH2.

The enzyme catalyses 5-O-(1-carboxyvinyl)-3-phosphoshikimate = chorismate + phosphate. Its pathway is metabolic intermediate biosynthesis; chorismate biosynthesis; chorismate from D-erythrose 4-phosphate and phosphoenolpyruvate: step 7/7. In terms of biological role, catalyzes the anti-1,4-elimination of the C-3 phosphate and the C-6 proR hydrogen from 5-enolpyruvylshikimate-3-phosphate (EPSP) to yield chorismate, which is the branch point compound that serves as the starting substrate for the three terminal pathways of aromatic amino acid biosynthesis. This reaction introduces a second double bond into the aromatic ring system. This is Chorismate synthase from Bordetella pertussis (strain Tohama I / ATCC BAA-589 / NCTC 13251).